Here is a 410-residue protein sequence, read N- to C-terminus: uncharacterized protein (410 aa).

The signal sequence occupies residues 1 to 41 (MVKSFRMKALIAGAAVAAAVSAGAVSDVPAAKVLQPTAAYA).

Interacts with PcrA, Pdp, YclM, YkvL, YhcQ and YomL. The interaction with PcrA is not essential for cell viability or repair of UV-induced lesions.

It is found in the secreted. Functionally, increases the processivity of the PcrA helicase, but does not bind to DNA. This is an uncharacterized protein from Bacillus subtilis (strain 168).